The sequence spans 74 residues: Protein SlyX homolog (74 aa).

Belongs to the SlyX family.

The sequence is that of Protein SlyX homolog from Neisseria meningitidis serogroup C (strain 053442).